The chain runs to 364 residues: Aminomethyltransferase (364 aa).

It belongs to the GcvT family. In terms of assembly, the glycine cleavage system is composed of four proteins: P, T, L and H.

It carries out the reaction N(6)-[(R)-S(8)-aminomethyldihydrolipoyl]-L-lysyl-[protein] + (6S)-5,6,7,8-tetrahydrofolate = N(6)-[(R)-dihydrolipoyl]-L-lysyl-[protein] + (6R)-5,10-methylene-5,6,7,8-tetrahydrofolate + NH4(+). In terms of biological role, the glycine cleavage system catalyzes the degradation of glycine. In Shigella boydii serotype 18 (strain CDC 3083-94 / BS512), this protein is Aminomethyltransferase.